Reading from the N-terminus, the 255-residue chain is GTP cyclohydrolase FolE2 (255 aa).

Belongs to the GTP cyclohydrolase IV family.

The enzyme catalyses GTP + H2O = 7,8-dihydroneopterin 3'-triphosphate + formate + H(+). The protein operates within cofactor biosynthesis; 7,8-dihydroneopterin triphosphate biosynthesis; 7,8-dihydroneopterin triphosphate from GTP: step 1/1. Functionally, converts GTP to 7,8-dihydroneopterin triphosphate. The chain is GTP cyclohydrolase FolE2 from Syntrophus aciditrophicus (strain SB).